A 500-amino-acid chain; its full sequence is Recombining binding protein suppressor of hairless (500 aa).

The tract at residues methionine 1–arginine 30 is disordered. DNA-binding stretches follow at residues glutamine 57 to phenylalanine 67 and serine 165 to lysine 170. Lysine 175 carries the post-translational modification N6-acetyllysine. Residues arginine 192 to threonine 197 are DNA-binding. Positions proline 355–threonine 445 constitute an IPT/TIG domain. Residues serine 465–tyrosine 481 are compositionally biased toward polar residues. Positions serine 465–serine 500 are disordered. Residues threonine 482–serine 500 are compositionally biased toward low complexity.

Belongs to the Su(H) family. As to quaternary structure, interacts with activated NOTCH1, NOTCH2 or NOTCH3. Interacts with MINT/SHARP. This interaction may mediate the recruitment of large corepressor complexes containing proteins such as HDAC1, HDAC2, NCOR2, SAP30, FHL1/KYOT2 and CIR1. Interacts with EP300, MAML1 and PTF1A. Interacts with RITA1/C12orf52, leading to nuclear export, prevent the interaction between RBPJ and NICD product and subsequent down-regulation of the Notch signaling pathway. Interacts with SNW1. Interacts with CHCHD2 and CXXC5. Interacts with BEND6 (via BEN domain). Interacts with NKAPL. Interacts with ZMIZ1. Interacts with RBM15. Interacts with L3MBTL3 and KDM1A; the interaction with KDM1A is weaker in the absence of L3MBTL3 and the interaction with L3MBTL3 is impaired by Notch-derived peptide containing the intracellular domain (NICD). (Microbial infection) Interacts with EBV EBNA2. Interacts with EBV EBNA3. Interacts with EBV EBNA4. Interacts with EBV EBNA6 (via N-terminus).

It is found in the nucleus. It localises to the cytoplasm. Functionally, transcriptional regulator that plays a central role in Notch signaling, a signaling pathway involved in cell-cell communication that regulates a broad spectrum of cell-fate determinations. Acts as a transcriptional repressor when it is not associated with Notch proteins. When associated with some NICD product of Notch proteins (Notch intracellular domain), it acts as a transcriptional activator that activates transcription of Notch target genes. Probably represses or activates transcription via the recruitment of chromatin remodeling complexes containing histone deacetylase or histone acetylase proteins, respectively. Specifically binds to the immunoglobulin kappa-type J segment recombination signal sequence. Binds specifically to methylated DNA. Binds to the oxygen responsive element of COX4I2 and activates its transcription under hypoxia conditions (4% oxygen). Negatively regulates the phagocyte oxidative burst in response to bacterial infection by repressing transcription of NADPH oxidase subunits. This Homo sapiens (Human) protein is Recombining binding protein suppressor of hairless.